The primary structure comprises 862 residues: Protein translocase subunit SecA (862 aa).

ATP is bound by residues Gln-86, 104 to 108 (GEGKT), and Asp-499. The Zn(2+) site is built by Cys-848, Cys-850, Cys-859, and His-860.

The protein belongs to the SecA family. In terms of assembly, monomer and homodimer. Part of the essential Sec protein translocation apparatus which comprises SecA, SecYEG and auxiliary proteins SecDF-YajC and YidC. It depends on Zn(2+) as a cofactor.

Its subcellular location is the cell inner membrane. The protein resides in the cytoplasm. It carries out the reaction ATP + H2O + cellular proteinSide 1 = ADP + phosphate + cellular proteinSide 2.. Its function is as follows. Part of the Sec protein translocase complex. Interacts with the SecYEG preprotein conducting channel. Has a central role in coupling the hydrolysis of ATP to the transfer of proteins into and across the cell membrane, serving both as a receptor for the preprotein-SecB complex and as an ATP-driven molecular motor driving the stepwise translocation of polypeptide chains across the membrane. The chain is Protein translocase subunit SecA from Ehrlichia chaffeensis (strain ATCC CRL-10679 / Arkansas).